The primary structure comprises 187 residues: UPF0301 protein Clim_0777 (187 aa).

It belongs to the UPF0301 (AlgH) family.

This Chlorobium limicola (strain DSM 245 / NBRC 103803 / 6330) protein is UPF0301 protein Clim_0777.